The primary structure comprises 545 residues: Putative serine/threonine-protein kinase L673 (545 aa).

The Cyclin N-terminal domain occupies 13-125 (RLGLVNWMLN…YKVYYLTIWK (113 aa)). A Protein kinase domain is found at 264–543 (IDFQNKLGSG…NCLKKIKESF (280 aa)). Residues 270–278 (LGSGTYGSV) and lysine 291 contribute to the ATP site. The active-site Proton acceptor is the aspartate 384.

It belongs to the protein kinase superfamily. Ser/Thr protein kinase family.

It carries out the reaction L-seryl-[protein] + ATP = O-phospho-L-seryl-[protein] + ADP + H(+). It catalyses the reaction L-threonyl-[protein] + ATP = O-phospho-L-threonyl-[protein] + ADP + H(+). The protein is Putative serine/threonine-protein kinase L673 of Acanthamoeba polyphaga (Amoeba).